The following is a 692-amino-acid chain: E3 ubiquitin-protein ligase MARCHF7 (692 aa).

Met-1 bears the N-acetylmethionine mark. Disordered regions lie at residues 1 to 165 (MESK…SHRS), 201 to 280 (STNH…GRRT), 296 to 343 (FFSR…RASE), 360 to 425 (LSQN…HLFR), 440 to 474 (SLGA…RNTG), and 512 to 532 (SSAD…PEKL). The segment covering 37-48 (YHSRDSSFRLDS) has biased composition (basic and acidic residues). Polar residues-rich tracts occupy residues 61 to 83 (PYQS…SQNQ) and 95 to 132 (SCTN…SSMV). A compositionally biased stretch (basic and acidic residues) spans 140–153 (LMRERRDLERRRDS). A compositionally biased stretch (polar residues) spans 201–214 (STNHQLPSEHQTVP). The segment covering 215–233 (SSRDSSRSSFRSHFSPRQS) has biased composition (low complexity). Residues 235 to 272 (SFRNSSHPAFSYLSSRNETPTISSSERAGSSQRPFQES) are compositionally biased toward polar residues. The segment covering 296 to 305 (FFSRRSSQDS) has biased composition (low complexity). Residues 306–336 (LNTRSLSSENYISPRTLTSQSRNNGASSSEV) are compositionally biased toward polar residues. 2 positions are modified to phosphoserine: Ser-318 and Ser-389. A compositionally biased stretch (low complexity) spans 450–462 (ASGASGNASASGS). A compositionally biased stretch (basic and acidic residues) spans 516–532 (GKSEKAKSAPSRDPEKL). The segment at 545–615 (DEEEEGDLCR…ELCKEKLQLN (71 aa)) adopts an RING-CH-type zinc-finger fold. The Zn(2+) site is built by Cys-553, Cys-556, Cys-571, Cys-573, His-581, Cys-584, Cys-605, and Cys-608. Thr-687 carries the phosphothreonine modification. Ser-688 carries the phosphoserine modification.

The protein localises to the cytoplasm. The catalysed reaction is S-ubiquitinyl-[E2 ubiquitin-conjugating enzyme]-L-cysteine + [acceptor protein]-L-lysine = [E2 ubiquitin-conjugating enzyme]-L-cysteine + N(6)-ubiquitinyl-[acceptor protein]-L-lysine.. The protein operates within protein modification; protein ubiquitination. Its function is as follows. E3 ubiquitin-protein ligase which may specifically enhance the E2 activity of HIP2. E3 ubiquitin ligases accept ubiquitin from an E2 ubiquitin-conjugating enzyme in the form of a thioester and then directly transfer the ubiquitin to targeted substrates. May be involved in T-cell proliferation by regulating LIF secretion. May play a role in lysosome homeostasis. Promotes 'Lys-6', 'Lys-11' and 'Lys-63'-linked mixed polyubiquitination on ATG14 leading to the inhibition of autophagy by impairing the interaction between ATG14 and STX7. Participates in the dopamine-mediated negative regulation of the NLRP3 inflammasome by promoting its uibiquitination and subsequent degradation. This Rattus norvegicus (Rat) protein is E3 ubiquitin-protein ligase MARCHF7 (Marchf7).